The following is a 383-amino-acid chain: E3 ubiquitin-protein ligase Os04g0590900 (383 aa).

Residues 53–73 form a helical membrane-spanning segment; sequence PVFSPLVIAIIGVLASAFLLV. Residues 105–129 are disordered; that stretch reads GGAGSGGRHGHGQSRSHESWNVSPP. The segment at 157–199 adopts an RING-type; atypical zinc-finger fold; sequence CSVCLGEFSDGESLRLLPRCSHAFHQQCIDTWLKSHSNCPLCR. 2 disordered regions span residues 269-291 and 320-383; these read EANGAAEIREEGSPPKRGASSFD and LLAG…DHPM.

It localises to the membrane. It catalyses the reaction S-ubiquitinyl-[E2 ubiquitin-conjugating enzyme]-L-cysteine + [acceptor protein]-L-lysine = [E2 ubiquitin-conjugating enzyme]-L-cysteine + N(6)-ubiquitinyl-[acceptor protein]-L-lysine.. It functions in the pathway protein modification; protein ubiquitination. Functionally, possesses E3 ubiquitin-protein ligase in vitro. The polypeptide is E3 ubiquitin-protein ligase Os04g0590900 (Oryza sativa subsp. japonica (Rice)).